A 1792-amino-acid polypeptide reads, in one-letter code: uncharacterized protein (1792 aa).

Residues 1–28 (MNNNNNNNNNSNNNNNSNNNNNGNSNNN) show a composition bias toward low complexity. 13 disordered regions span residues 1-34 (MNNNNNNNNNSNNNNNSNNNNNGNSNNNFFSGKG), 162-187 (TNISNNNKQPISSNQHPYQQKQSHHH), 440-461 (KKRKKKERKKNENIYNNRNKSS), 544-568 (VIDDNKKRNKKEKKKTIPNNDSIIN), 736-777 (NKNK…INSN), 837-979 (TKGK…NDLK), 1044-1071 (VSKSNIPSSFSSPPKETNNKNDIDKEQS), 1084-1106 (NMNNEKSKDLYFNKNDIDNNDNK), 1160-1215 (TSSG…VLER), 1257-1290 (NITANNNNDNNKNNDNDNNNNNNDNIINNNNNNG), 1651-1686 (LRSKSDTKSKEHKKKDKKYKMLFKKKEGKGKPGRKK), 1704-1731 (PRKKYERVKPRKSKNAMMNEEKSGNSEK), and 1742-1761 (IENKHKSKKGRKPKESNLNN). Over residues 169–182 (KQPISSNQHPYQQK) the composition is skewed to polar residues. Residues 550–559 (KRNKKEKKKT) show a composition bias toward basic residues. Residues 741–776 (PNNINSNDNNNKNDDNNNNNNKNVDGNNNNNNNINS) are compositionally biased toward low complexity. Residues 838 to 847 (KGKKKGRKKK) are compositionally biased toward basic residues. Basic and acidic residues predominate over residues 856 to 873 (NIKEDIKSSKKDKKKDNI). Residues 874–924 (NDNNNDNNNDNNNDNNNDNNNDNNNDNNNDNNNNNNNNNNNNNNNNNNNHN) are compositionally biased toward low complexity. A compositionally biased stretch (basic residues) spans 943–954 (KKKTRQYRKKSK). Residues 955–966 (ITNDDNNEKIKQ) are compositionally biased toward basic and acidic residues. The segment covering 1045-1057 (SKSNIPSSFSSPP) has biased composition (low complexity). 3 stretches are compositionally biased toward basic and acidic residues: residues 1060–1071 (TNNKNDIDKEQS), 1088–1106 (EKSKDLYFNKNDIDNNDNK), and 1166–1192 (NKEENNKKEDDEKHFDDNTNEQKKNVD). Over residues 1205-1215 (RKKRKKDVLER) the composition is skewed to basic residues. Positions 1261–1289 (NNNNDNNKNNDNDNNNNNNDNIINNNNNN) are enriched in low complexity. Composition is skewed to basic residues over residues 1660-1686 (KEHKKKDKKYKMLFKKKEGKGKPGRKK) and 1704-1717 (PRKKYERVKPRKSK).

This is an uncharacterized protein from Plasmodium falciparum (isolate 3D7).